Consider the following 315-residue polypeptide: GPN-loop GTPase 2 homolog (315 aa).

12 to 17 provides a ligand contact to GTP; the sequence is GSGKTV. Positions 69-71 match the Gly-Pro-Asn (GPN)-loop; involved in dimer interface motif; it reads GPN. 171–174 contacts GTP; sequence SKMD.

The protein belongs to the GPN-loop GTPase family. Heterodimers with gpn1 or gpn3. Binds to RNA polymerase II (RNAPII).

Functionally, small GTPase required for proper localization of RNA polymerase II and III (RNAPII and RNAPIII). May act at an RNAP assembly step prior to nuclear import. The polypeptide is GPN-loop GTPase 2 homolog (gpn2) (Dictyostelium discoideum (Social amoeba)).